The sequence spans 404 residues: Formate-dependent phosphoribosylglycinamide formyltransferase (404 aa).

N(1)-(5-phospho-beta-D-ribosyl)glycinamide contacts are provided by residues 25–26 (EL) and Glu-85. Residues Arg-118, Lys-159, 164–169 (SSGKGQ), 199–202 (EGFI), and Glu-207 each bind ATP. In terms of domain architecture, ATP-grasp spans 123 to 318 (RLAAEELGLP…EFELHARAIL (196 aa)). Mg(2+) contacts are provided by Glu-277 and Glu-289. Residues Asp-296, Lys-365, and 372 to 373 (RR) each bind N(1)-(5-phospho-beta-D-ribosyl)glycinamide.

The protein belongs to the PurK/PurT family. Homodimer.

It carries out the reaction N(1)-(5-phospho-beta-D-ribosyl)glycinamide + formate + ATP = N(2)-formyl-N(1)-(5-phospho-beta-D-ribosyl)glycinamide + ADP + phosphate + H(+). The protein operates within purine metabolism; IMP biosynthesis via de novo pathway; N(2)-formyl-N(1)-(5-phospho-D-ribosyl)glycinamide from N(1)-(5-phospho-D-ribosyl)glycinamide (formate route): step 1/1. Its function is as follows. Involved in the de novo purine biosynthesis. Catalyzes the transfer of formate to 5-phospho-ribosyl-glycinamide (GAR), producing 5-phospho-ribosyl-N-formylglycinamide (FGAR). Formate is provided by PurU via hydrolysis of 10-formyl-tetrahydrofolate. This is Formate-dependent phosphoribosylglycinamide formyltransferase from Burkholderia pseudomallei (strain 668).